The chain runs to 288 residues: Mycothiol S-conjugate amidase (288 aa).

3 residues coordinate Zn(2+): H12, D15, and H142.

The protein belongs to the MshB deacetylase family. Mca subfamily. Monomer. Zn(2+) is required as a cofactor.

It carries out the reaction mycothiol S-conjugate + H2O = an N-acetyl-L-cysteine-S-conjugate + 1D-myo-inositol 2-amino-2-deoxy-alpha-D-glucopyranoside. With respect to regulation, partially inhibited by MSH when MSmB (a bimane derivative of MSH) is used as substrate. In terms of biological role, a mycothiol (MSH, N-acetyl-cysteinyl-glucosaminyl-inositol) S-conjugate amidase, it recycles conjugated MSH to the N-acetyl cysteine conjugate and the MSH precursor. Involved in MSH-dependent detoxification of a number of alkylating agents and antibiotics. Activity is specific for the mycothiol moiety. This Mycolicibacterium smegmatis (strain ATCC 700084 / mc(2)155) (Mycobacterium smegmatis) protein is Mycothiol S-conjugate amidase.